A 273-amino-acid polypeptide reads, in one-letter code: Phosphate import ATP-binding protein PstB (273 aa).

The region spanning 19 to 258 (LSLQNVTISY…FNDTDKIFNA (240 aa)) is the ABC transporter domain. ATP is bound at residue 51-58 (GPSGCGKS).

Belongs to the ABC transporter superfamily. Phosphate importer (TC 3.A.1.7) family. The complex is composed of two ATP-binding proteins (PstB), two transmembrane proteins (PstC and PstA) and a solute-binding protein (PstS).

The protein resides in the cell inner membrane. It carries out the reaction phosphate(out) + ATP + H2O = ADP + 2 phosphate(in) + H(+). Functionally, part of the ABC transporter complex PstSACB involved in phosphate import. Responsible for energy coupling to the transport system. In Synechococcus sp. (strain CC9605), this protein is Phosphate import ATP-binding protein PstB.